The chain runs to 22 residues: Peptide PGLa-R1 (22 aa).

Leucine amide is present on L22.

In terms of tissue distribution, expressed by the skin glands.

The protein localises to the secreted. Functionally, antimicrobial peptide. The polypeptide is Peptide PGLa-R1 (Xenopus ruwenzoriensis (Uganda clawed frog)).